Here is a 397-residue protein sequence, read N- to C-terminus: 2-oxoglutarate and iron-dependent oxygenase domain-containing protein ICU11 (397 aa).

The disordered stretch occupies residues 1-56 (MCNQTPLRSMALDSSGKQPEQQQQQQPRASSGNGEARLKLRRTPNEEHEPENYEDL). Residues 18–27 (QPEQQQQQQP) are compositionally biased toward low complexity. One can recognise a Fe2OG dioxygenase domain in the interval 238–339 (SLDSHHGYIV…RANLILWCRS (102 aa)). Fe cation-binding residues include histidine 260, aspartate 262, and histidine 320. Arginine 330 provides a ligand contact to 2-oxoglutarate.

Requires Fe(2+) as cofactor. The cofactor is L-ascorbate. As to expression, expressed in roots, cotyledons, rosette leaves, cauline leaves and inflorescences.

It is found in the nucleus. The protein localises to the nucleoplasm. Participates in the epigenetic repression of flowering genes in association with CP2. Functions in the repression of several members of the MADS-box transcription factors family, including SEP3, during vegetative development via histone modification. This Arabidopsis thaliana (Mouse-ear cress) protein is 2-oxoglutarate and iron-dependent oxygenase domain-containing protein ICU11.